The chain runs to 691 residues: Elongation factor G (691 aa).

Positions 8 to 283 constitute a tr-type G domain; sequence EDYRNFGIMA…AVVDYLPSPA (276 aa). Residues 17–24, 81–85, and 135–138 each bind GTP; these read AHIDAGKT, DTPGH, and NKMD.

This sequence belongs to the TRAFAC class translation factor GTPase superfamily. Classic translation factor GTPase family. EF-G/EF-2 subfamily.

The protein resides in the cytoplasm. Functionally, catalyzes the GTP-dependent ribosomal translocation step during translation elongation. During this step, the ribosome changes from the pre-translocational (PRE) to the post-translocational (POST) state as the newly formed A-site-bound peptidyl-tRNA and P-site-bound deacylated tRNA move to the P and E sites, respectively. Catalyzes the coordinated movement of the two tRNA molecules, the mRNA and conformational changes in the ribosome. The sequence is that of Elongation factor G from Methylobacterium radiotolerans (strain ATCC 27329 / DSM 1819 / JCM 2831 / NBRC 15690 / NCIMB 10815 / 0-1).